Reading from the N-terminus, the 758-residue chain is Putative transcriptional regulatory protein YJL206C (758 aa).

Residues 47-73 (CIACRKRKVRCSGNIPCRLCQTNSYEC) constitute a DNA-binding region (zn(2)-C6 fungal-type).

Belongs to the ASG1 family.

It localises to the nucleus. The polypeptide is Putative transcriptional regulatory protein YJL206C (Saccharomyces cerevisiae (strain ATCC 204508 / S288c) (Baker's yeast)).